The following is a 90-amino-acid chain: Serine protease inhibitor Cvsi-1 (90 aa).

An N-terminal signal peptide occupies residues 1–19 (MDVVRTLILCVCLFGLTFA).

Post-translationally, contains 6 disulfide bonds. In terms of tissue distribution, detected in hemolymph (at protein level). In oysters collected in the summer the expression level is highest in the digestive gland with low levels of expression in gill, mantle, labial palp, style-sac midgut, gonad, heart, and hemocyte. In winter expression levels are higher in all tissues with highest expression levels observed in the digestive gland. Within the digestive gland expression is limited to the basophil cells of the digestive diverticula.

Its subcellular location is the secreted. Functionally, slow-binding inhibitor of serine proteases. The inhibitor rapidly binds to the protease forming a weak enzyme-inhibitor complex, and this is followed by a slow isomerization forming a tight-binding enzyme-inhibitor complex. Active against subtilisin A, perkinsin and trypsin with dissociation constants of 0.29 nM, 13.7 nM and 17.7 nM respectively. Not active against thermolysin, papain or pepsin. Has antiparasitic activity against the protozoan P.marinus. The protein is Serine protease inhibitor Cvsi-1 of Crassostrea virginica (Eastern oyster).